Consider the following 244-residue polypeptide: Triosephosphate isomerase (244 aa).

Residue 9–11 (NWK) participates in substrate binding. The active-site Electrophile is H93. E161 (proton acceptor) is an active-site residue. Residues G167, S206, and 227 to 228 (GG) each bind substrate.

This sequence belongs to the triosephosphate isomerase family. Homodimer.

The protein localises to the cytoplasm. The enzyme catalyses D-glyceraldehyde 3-phosphate = dihydroxyacetone phosphate. It functions in the pathway carbohydrate biosynthesis; gluconeogenesis. It participates in carbohydrate degradation; glycolysis; D-glyceraldehyde 3-phosphate from glycerone phosphate: step 1/1. Functionally, involved in the gluconeogenesis. Catalyzes stereospecifically the conversion of dihydroxyacetone phosphate (DHAP) to D-glyceraldehyde-3-phosphate (G3P). The chain is Triosephosphate isomerase from Deinococcus geothermalis (strain DSM 11300 / CIP 105573 / AG-3a).